The sequence spans 339 residues: Dihydroorotate dehydrogenase (quinone) (339 aa).

FMN contacts are provided by residues 62–66 (AGMDK) and T86. K66 is a binding site for substrate. Residue 111–115 (NRMGF) participates in substrate binding. Residues N139 and N172 each coordinate FMN. N172 is a binding site for substrate. The active-site Nucleophile is S175. N177 lines the substrate pocket. FMN-binding residues include K217 and T245. 246-247 (NT) is a binding site for substrate. Residues G268, G297, and 318 to 319 (YS) contribute to the FMN site.

Belongs to the dihydroorotate dehydrogenase family. Type 2 subfamily. As to quaternary structure, monomer. It depends on FMN as a cofactor.

The protein localises to the cell membrane. It catalyses the reaction (S)-dihydroorotate + a quinone = orotate + a quinol. It participates in pyrimidine metabolism; UMP biosynthesis via de novo pathway; orotate from (S)-dihydroorotate (quinone route): step 1/1. Its function is as follows. Catalyzes the conversion of dihydroorotate to orotate with quinone as electron acceptor. This chain is Dihydroorotate dehydrogenase (quinone), found in Shewanella oneidensis (strain ATCC 700550 / JCM 31522 / CIP 106686 / LMG 19005 / NCIMB 14063 / MR-1).